Here is a 282-residue protein sequence, read N- to C-terminus: NFU1 iron-sulfur cluster scaffold homolog, mitochondrial (282 aa).

The transit peptide at 1–27 (MSKLLSYTARIILRNSRITVRQLVRGF) directs the protein to the mitochondrion. The interval 178-246 (IKELLDTRIR…IPEVESVEQV (69 aa)) is nifU. Residues cysteine 215 and cysteine 218 each coordinate [4Fe-4S] cluster. A disordered region spans residues 263 to 282 (KNLKQKEPAGAPVGIGGGPN).

Belongs to the NifU family.

The protein resides in the mitochondrion. In terms of biological role, molecular scaffold for [Fe-S] cluster assembly of mitochondrial iron-sulfur proteins. This is NFU1 iron-sulfur cluster scaffold homolog, mitochondrial from Drosophila persimilis (Fruit fly).